We begin with the raw amino-acid sequence, 309 residues long: SUR7 family protein FMP45 (309 aa).

At 1 to 5 (MIFKR) the chain is on the cytoplasmic side. Residues 6 to 26 (FVNLLVFLFLLGAGLLTFFLI) form a helical membrane-spanning segment. The Extracellular portion of the chain corresponds to 27-116 (LSGGRESGTL…YYLSRVGWAM (90 aa)). Asparagine 73 is a glycosylation site (N-linked (GlcNAc...) asparagine). A helical transmembrane segment spans residues 117–137 (LLISLFFIVLALVPGFLATFL). Over 138–140 (PFK) the chain is Cytoplasmic. The helical transmembrane segment at 141 to 161 (AVPVLYCVLSWLAFFFIILAA) threads the bilayer. Residues 162-188 (CLYTGCYVKARKTFRNSGRSARLGPKN) are Extracellular-facing. The helical transmembrane segment at 189-209 (FAFIWTSVFLMLVNAIWSTIF) threads the bilayer. Residues 210–309 (SATHKAHSTY…GLAGPVTVRD (100 aa)) are Cytoplasmic-facing. 2 positions are modified to phosphoserine: serine 230 and serine 232. The residue at position 235 (threonine 235) is a Phosphothreonine. Residues 253–309 (GPITAAPVVGQPQPTTTTTPAGNGKFFQKLKTRKQVPSAELEPAGDGGLAGPVTVRD) form a disordered region. Over residues 258-274 (APVVGQPQPTTTTTPAG) the composition is skewed to low complexity.

Belongs to the SUR7 family.

The protein localises to the cell membrane. Functionally, involved in sporulation and affects the sphingolipid composition of the plasma membrane. The polypeptide is SUR7 family protein FMP45 (FMP45) (Saccharomyces cerevisiae (strain ATCC 204508 / S288c) (Baker's yeast)).